Here is a 132-residue protein sequence, read N- to C-terminus: Fatty acid-binding protein, adipocyte (132 aa).

Positions 22 to 32 match the Nuclear localization signal motif; that stretch reads KELGVGFATRK. Arginine 107 and arginine 127 together coordinate (9Z,12Z)-octadecadienoate.

Belongs to the calycin superfamily. Fatty-acid binding protein (FABP) family. As to quaternary structure, monomer.

It is found in the cytoplasm. The protein resides in the nucleus. Functionally, lipid transport protein in adipocytes. Binds both long chain fatty acids and retinoic acid. Delivers long-chain fatty acids and retinoic acid to their cognate receptors in the nucleus. Has the highest binding affinity for linoleic acid and decreasing relative affinity for eicosapentaenoic acid (EPA), alpha-linolenic acid (ALA), docosahexaenoic acid (DHA), oleic acid, palmitic acid and stearic acid, respectively. This Pygoscelis papua (Gentoo penguin) protein is Fatty acid-binding protein, adipocyte.